We begin with the raw amino-acid sequence, 405 residues long: Argininosuccinate synthase (405 aa).

Residues 10-18 (AYSGGLDTS) and Ala-37 each bind ATP. Tyr-88 and Ser-93 together coordinate L-citrulline. Position 118 (Gly-118) interacts with ATP. L-aspartate is bound by residues Thr-120, Asn-124, and Asp-125. Asn-124 is an L-citrulline binding site. Positions 128, 179, 188, 264, and 276 each coordinate L-citrulline.

The protein belongs to the argininosuccinate synthase family. Type 1 subfamily. As to quaternary structure, homotetramer.

The protein localises to the cytoplasm. The catalysed reaction is L-citrulline + L-aspartate + ATP = 2-(N(omega)-L-arginino)succinate + AMP + diphosphate + H(+). The protein operates within amino-acid biosynthesis; L-arginine biosynthesis; L-arginine from L-ornithine and carbamoyl phosphate: step 2/3. This Ectopseudomonas mendocina (strain ymp) (Pseudomonas mendocina) protein is Argininosuccinate synthase.